We begin with the raw amino-acid sequence, 249 residues long: Diaminopimelate epimerase (249 aa).

Substrate is bound by residues Asn-11 and Asn-60. The Proton donor role is filled by Cys-69. Substrate contacts are provided by residues 70–71 (GN), Asn-164, and 182–183 (ER). The active-site Proton acceptor is the Cys-192. 193–194 (GT) is a substrate binding site.

The protein belongs to the diaminopimelate epimerase family. In terms of assembly, homodimer.

It is found in the cytoplasm. The enzyme catalyses (2S,6S)-2,6-diaminopimelate = meso-2,6-diaminopimelate. It participates in amino-acid biosynthesis; L-lysine biosynthesis via DAP pathway; DL-2,6-diaminopimelate from LL-2,6-diaminopimelate: step 1/1. Catalyzes the stereoinversion of LL-2,6-diaminopimelate (L,L-DAP) to meso-diaminopimelate (meso-DAP), a precursor of L-lysine and an essential component of the bacterial peptidoglycan. The protein is Diaminopimelate epimerase of Campylobacter jejuni subsp. jejuni serotype O:23/36 (strain 81-176).